A 595-amino-acid polypeptide reads, in one-letter code: MNSNKEETTADGSVSTTEEQQQQQQPQQQEQINTTTASTTSNGENTASDNNNNSNNNNNNNTNNTNTNNNCDISMTEDNSKEEDTGIKVIGEGELWGKLISLNPTYPTIEIRQDSIILGRSKGVCNYTFTSPTVSGKHCKIYRDPTVKSRNVAFVDDTSTNGTFINNEVIGKGSKILIENGCEISVIPKKGSEKISFIYQDCFEEQKEMEQGGPQQKYDLREVLGTGNFASVRLGVEKETGNKYAIKIIDKKKMSMTSKRKDSLMDEVNVLTKVKHQNIISIKEVFETQKNLYLVLELVTGGELFDKIVSERKFQEDTCRYILKQLCDSVRYLHSNGIAHRDLKPENILLATPNSFLLKISDFGLSRAMDEGTYMKTMCGTPQYVAPEILTKGEREGYGKSVDLWSIGVITYILLCGFPPFGDPQTKDFFEKIKNGGFSFPSPYWDEISDEAKSLIKNLIKVDVEKRFTIDQALNHPWFTNHEEKTKEFYEKDKLEFPPPSTNDDHQPTPNTTSSNSQLVPESKCDQIQDNTTDNNNNNNNNNNNNNNNNNNNTTNNSNNIDNNNGNDESKSSKKRQLSEDSNINDEHEQKKVKN.

A disordered region spans residues Met1–Asp84. The segment covering Glu18–Gln31 has biased composition (low complexity). The span at Ile32–Asp49 shows a compositional bias: polar residues. Low complexity predominate over residues Asn50–Asn70. An FHA domain is found at Ile116–Ile170. The Protein kinase domain maps to Tyr218 to Phe479. ATP is bound by residues Leu224–Val232 and Lys247. Residue Asp342 is the Proton acceptor of the active site. Thr377 carries the post-translational modification Phosphothreonine; by autocatalysis. The interval Lys494 to Asn595 is disordered. The segment covering Pro508–Val520 has biased composition (polar residues). Low complexity predominate over residues Asp530 to Asn567. A compositionally biased stretch (basic and acidic residues) spans Asn585–Asn595.

This sequence belongs to the protein kinase superfamily. CAMK Ser/Thr protein kinase family. CHK2 subfamily.

The catalysed reaction is L-seryl-[protein] + ATP = O-phospho-L-seryl-[protein] + ADP + H(+). The enzyme catalyses L-threonyl-[protein] + ATP = O-phospho-L-threonyl-[protein] + ADP + H(+). The chain is Probable serine/threonine-protein kinase fhkC (fhkC) from Dictyostelium discoideum (Social amoeba).